The primary structure comprises 1126 residues: DNA-directed RNA polymerase subunit Rpo2 (1126 aa).

Zn(2+) is bound by residues Cys1060, Cys1063, Cys1078, and His1081.

Belongs to the RNA polymerase beta chain family. Part of the 13-subunit RNA polymerase complex. Interacts with TFS4. In terms of assembly, (Microbial infection) Binds viral protein RIP which blocks global transcription. The cofactor is Zn(2+).

The protein localises to the cytoplasm. It carries out the reaction RNA(n) + a ribonucleoside 5'-triphosphate = RNA(n+1) + diphosphate. In terms of biological role, DNA-dependent RNA polymerase (RNAP) catalyzes the transcription of DNA into RNA using the four ribonucleoside triphosphates as substrates. This subunit is involved in DNA promoter recognition. The polypeptide is DNA-directed RNA polymerase subunit Rpo2 (Sulfolobus acidocaldarius (strain ATCC 33909 / DSM 639 / JCM 8929 / NBRC 15157 / NCIMB 11770)).